The following is a 256-amino-acid chain: Acetyl-coenzyme A carboxylase carboxyl transferase subunit alpha (256 aa).

The CoA carboxyltransferase C-terminal domain maps to 1–236; the sequence is MTKITRIIKE…KEEIAAELDS (236 aa).

This sequence belongs to the AccA family. In terms of assembly, acetyl-CoA carboxylase is a heterohexamer composed of biotin carboxyl carrier protein (AccB), biotin carboxylase (AccC) and two subunits each of ACCase subunit alpha (AccA) and ACCase subunit beta (AccD).

Its subcellular location is the cytoplasm. It catalyses the reaction N(6)-carboxybiotinyl-L-lysyl-[protein] + acetyl-CoA = N(6)-biotinyl-L-lysyl-[protein] + malonyl-CoA. Its pathway is lipid metabolism; malonyl-CoA biosynthesis; malonyl-CoA from acetyl-CoA: step 1/1. Its function is as follows. Component of the acetyl coenzyme A carboxylase (ACC) complex. First, biotin carboxylase catalyzes the carboxylation of biotin on its carrier protein (BCCP) and then the CO(2) group is transferred by the carboxyltransferase to acetyl-CoA to form malonyl-CoA. The chain is Acetyl-coenzyme A carboxylase carboxyl transferase subunit alpha from Streptococcus sanguinis (strain SK36).